A 90-amino-acid polypeptide reads, in one-letter code: Putative antitoxin VapB8 (90 aa).

Positions 1–56 (MEKSRCHAVAHGGGCAGSAKSHKSGGRCGQGRGAGDSHGTRGAGRRYRAASAPHPL) are disordered. Positions 26-36 (GRCGQGRGAGD) are enriched in gly residues.

Functionally, antitoxin component of a possible type II toxin-antitoxin (TA) system. The cognate toxin is VapC8. In Mycobacterium tuberculosis (strain ATCC 25618 / H37Rv), this protein is Putative antitoxin VapB8 (vapB8).